The chain runs to 145 residues: Antiholin-like protein LrgA (145 aa).

4 consecutive transmembrane segments (helical) span residues 10 to 30 (PAHF…SKII), 33 to 53 (FMPI…VLLC), 72 to 92 (NIGL…GVIS), and 96 to 116 (FLII…TGYV).

The protein belongs to the CidA/LrgA family. LrgA subfamily.

It is found in the cell membrane. In terms of biological role, inhibits the expression or activity of extracellular murein hydrolases by interacting, possibly with LrgB, with the holin-like proteins CidA and/or CidB. The LrgAB and CidAB proteins may affect the proton motive force of the membrane. May be involved in programmed cell death (PCD), possibly triggering PCD in response to antibiotics and environmental stresses. In Staphylococcus aureus (strain JH1), this protein is Antiholin-like protein LrgA.